Here is a 64-residue protein sequence, read N- to C-terminus: Large ribosomal subunit protein bL32 (64 aa).

The span at 1 to 15 (MAVPKRKVSKSRRDS) shows a compositional bias: basic residues. Residues 1 to 21 (MAVPKRKVSKSRRDSRRAQTF) form a disordered region.

Belongs to the bacterial ribosomal protein bL32 family.

This Symbiobacterium thermophilum (strain DSM 24528 / JCM 14929 / IAM 14863 / T) protein is Large ribosomal subunit protein bL32.